Consider the following 217-residue polypeptide: Twisted gastrulation protein homolog 1-A (217 aa).

The first 26 residues, 1-26, serve as a signal peptide directing secretion; sequence MRPALFLCPVLISVLFLLSSLSLISG. Residues N53 and N147 are each glycosylated (N-linked (GlcNAc...) asparagine).

The protein belongs to the twisted gastrulation protein family.

It localises to the secreted. Its function is as follows. Involved in dorsal-ventral patterning. Appears to function predominantly as a ventralizing factor, through its actions as a BMP signaling agonist, acting through both chd-dependent and chd-independent mechanisms. May also antagonize BMP signaling, probably via formation of ternary complexes with chd and BMPs, resulting in dorsalization. This Danio rerio (Zebrafish) protein is Twisted gastrulation protein homolog 1-A (twsg1a).